We begin with the raw amino-acid sequence, 510 residues long: MLTVDSQHCFSFILLCFFSLLCYSLLFKKLKDSHVGRDLLQSPPSLPIIGHLHHLLSSLAHKSLQQLSSKYGPLLHLSIFNFPVVLVSSASVAYEIFKAHDLNISSRDNPPINESLLVGSSVFVGAPYGDYWKFMKKLLVTKLLGPQALERSRSIRADELERFYRSLLDKAMKKESVEIGKEATKLSINSICRMSMGRSFSEESGEAERVRGLVTELDGLTKKVLLVNILRWPLEKLRISLFKKEIMYVSNSFDELLERIIVEREKKPNEHQGTYLMDVLLEAYEDEKAEHKITRNHIKSLFVELLLGGTDTSAQTIQWTMAELINNRNVLKRLREEIDSVVGETRLIQEKDLPKLPYLQSVVKEGLRLHPPLPLMVRTFQRSCEMKGFYIAEKTTLVVNAYAVMRDPTTWEDPDEFKPERFLRQEEERRALKHIAFGSGRRGCPGSNLATIFIGTAIGTMVQCFDLSIKGDKVKMDEVGGLNLTMAHPLECILVPRTQPFISNQQIPSL.

The chain crosses the membrane as a helical span at residues 7-27; sequence QHCFSFILLCFFSLLCYSLLF.

Belongs to the cytochrome P450 family. Requires heme as cofactor.

The protein localises to the membrane. The polypeptide is Cytochrome P450 705A20 (CYP705A20) (Arabidopsis thaliana (Mouse-ear cress)).